Here is a 183-residue protein sequence, read N- to C-terminus: UPF0397 protein PBPRA2239 (183 aa).

The next 5 helical transmembrane spans lie at 8–28 (VVLI…MFGI), 41–61 (AVLA…VGFI), 69–89 (FAGW…GLII), 110–130 (FALF…CSAY), and 147–167 (LIII…YILT).

The protein belongs to the UPF0397 family.

It localises to the cell membrane. This is UPF0397 protein PBPRA2239 from Photobacterium profundum (strain SS9).